The following is a 285-amino-acid chain: Probable endonuclease 4 (285 aa).

Positions 69, 109, 145, 179, 182, 216, 229, 231, and 261 each coordinate Zn(2+).

The protein belongs to the AP endonuclease 2 family. Zn(2+) serves as cofactor.

It carries out the reaction Endonucleolytic cleavage to 5'-phosphooligonucleotide end-products.. Its function is as follows. Endonuclease IV plays a role in DNA repair. It cleaves phosphodiester bonds at apurinic or apyrimidinic (AP) sites, generating a 3'-hydroxyl group and a 5'-terminal sugar phosphate. The protein is Probable endonuclease 4 of Shigella boydii serotype 4 (strain Sb227).